The following is a 331-amino-acid chain: Phenylalanine--tRNA ligase alpha subunit (331 aa).

E252 is a binding site for Mg(2+).

This sequence belongs to the class-II aminoacyl-tRNA synthetase family. Phe-tRNA synthetase alpha subunit type 1 subfamily. As to quaternary structure, tetramer of two alpha and two beta subunits. Requires Mg(2+) as cofactor.

The protein localises to the cytoplasm. It carries out the reaction tRNA(Phe) + L-phenylalanine + ATP = L-phenylalanyl-tRNA(Phe) + AMP + diphosphate + H(+). The polypeptide is Phenylalanine--tRNA ligase alpha subunit (Hahella chejuensis (strain KCTC 2396)).